Reading from the N-terminus, the 293-residue chain is MAMRQCAIYGKGGIGKSTTTQNLVAALAEMGKKIMIVGCDPKADSTRLILHAKAQNTIMEMAAEVGSVEDLELEDVLQIGYGNVRCAESGGPEPGVGCAGRGVITAINFLEEEGAYVDDLDFVFYDVLGDVVCGGFAMPIRENKAQEIYIVCSGEMMAMYAANNICKGIVKYAKTGKVRLGGLICNSRNTDREDELIIALAEKIGTQMIHFVPRDNIVQRAEIRRMTVIEYDPNCSQANEYRQLAQKIVANTMKVIPVPCTMDELEELLMEFGIMEEEDTTIIGKTAAEENAA.

Residue 10–17 (GKGGIGKS) participates in ATP binding. Cysteine 98 lines the [4Fe-4S] cluster pocket. Arginine 101 is modified (ADP-ribosylarginine; by dinitrogenase reductase ADP-ribosyltransferase). A [4Fe-4S] cluster-binding site is contributed by cysteine 133.

It belongs to the NifH/BchL/ChlL family. Homodimer. It depends on [4Fe-4S] cluster as a cofactor. The reversible ADP-ribosylation of Arg-101 inactivates the nitrogenase reductase and regulates nitrogenase activity.

The enzyme catalyses N2 + 8 reduced [2Fe-2S]-[ferredoxin] + 16 ATP + 16 H2O = H2 + 8 oxidized [2Fe-2S]-[ferredoxin] + 2 NH4(+) + 16 ADP + 16 phosphate + 6 H(+). The key enzymatic reactions in nitrogen fixation are catalyzed by the nitrogenase complex, which has 2 components: the iron protein and the molybdenum-iron protein. This is Nitrogenase iron protein from Pectobacterium atrosepticum (strain SCRI 1043 / ATCC BAA-672) (Erwinia carotovora subsp. atroseptica).